Here is a 225-residue protein sequence, read N- to C-terminus: NAD(P)H-quinone oxidoreductase subunit K, chloroplastic (225 aa).

4 residues coordinate [4Fe-4S] cluster: C43, C44, C108, and C139.

This sequence belongs to the complex I 20 kDa subunit family. NDH is composed of at least 16 different subunits, 5 of which are encoded in the nucleus. Requires [4Fe-4S] cluster as cofactor.

The protein localises to the plastid. It is found in the chloroplast thylakoid membrane. It catalyses the reaction a plastoquinone + NADH + (n+1) H(+)(in) = a plastoquinol + NAD(+) + n H(+)(out). The catalysed reaction is a plastoquinone + NADPH + (n+1) H(+)(in) = a plastoquinol + NADP(+) + n H(+)(out). Its function is as follows. NDH shuttles electrons from NAD(P)H:plastoquinone, via FMN and iron-sulfur (Fe-S) centers, to quinones in the photosynthetic chain and possibly in a chloroplast respiratory chain. The immediate electron acceptor for the enzyme in this species is believed to be plastoquinone. Couples the redox reaction to proton translocation, and thus conserves the redox energy in a proton gradient. This Illicium oligandrum (Star anise) protein is NAD(P)H-quinone oxidoreductase subunit K, chloroplastic.